Reading from the N-terminus, the 179-residue chain is Large ribosomal subunit protein uL6 (179 aa).

This sequence belongs to the universal ribosomal protein uL6 family. In terms of assembly, part of the 50S ribosomal subunit.

This protein binds to the 23S rRNA, and is important in its secondary structure. It is located near the subunit interface in the base of the L7/L12 stalk, and near the tRNA binding site of the peptidyltransferase center. The chain is Large ribosomal subunit protein uL6 from Clostridium acetobutylicum (strain ATCC 824 / DSM 792 / JCM 1419 / IAM 19013 / LMG 5710 / NBRC 13948 / NRRL B-527 / VKM B-1787 / 2291 / W).